The primary structure comprises 565 residues: Thiol:disulfide interchange protein DsbD (565 aa).

Residues 1-19 (MAQRIFTLILLLCSTSVFA) form the signal peptide. 2 disulfide bridges follow: Cys-122–Cys-128 and Cys-182–Cys-304. Transmembrane regions (helical) follow at residues 163–183 (LPFSALWALLIGIGIAFTPCV), 208–228 (LLTFIYVQGMALTYTALGLVV), 243–263 (YVLIGLAIVFTLLAMSMFGLF), 296–316 (IAGLICSPCTTAPLSAILLYI), 323–343 (WLGGGTLYLYALGMGLPLMLI), 357–377 (WMEQVKTAFGFVILALPVFLL), and 384–404 (VWGLRLWSALGVAFFGWAFIT). Residues 434-565 (WAFGATHTAQ…FSAHLRDRQP (132 aa)) enclose the Thioredoxin domain. Cys-480 and Cys-483 form a disulfide bridge.

It belongs to the thioredoxin family. DsbD subfamily.

Its subcellular location is the cell inner membrane. The catalysed reaction is [protein]-dithiol + NAD(+) = [protein]-disulfide + NADH + H(+). It catalyses the reaction [protein]-dithiol + NADP(+) = [protein]-disulfide + NADPH + H(+). In terms of biological role, required to facilitate the formation of correct disulfide bonds in some periplasmic proteins and for the assembly of the periplasmic c-type cytochromes. Acts by transferring electrons from cytoplasmic thioredoxin to the periplasm. This transfer involves a cascade of disulfide bond formation and reduction steps. The protein is Thiol:disulfide interchange protein DsbD of Shigella boydii serotype 4 (strain Sb227).